The chain runs to 721 residues: WD repeat and coiled-coil-containing protein (721 aa).

At methionine 1 the chain carries N-acetylmethionine. WD repeat units follow at residues 55–98 (GQFE…MESS) and 154–194 (NTQG…LHRC). 4 positions are modified to phosphoserine: serine 299, serine 468, serine 501, and serine 523. The segment covering 520–537 (QPASLPRHSSTPDHTSTL) has biased composition (polar residues). The disordered stretch occupies residues 520–553 (QPASLPRHSSTPDHTSTLEPPRLPQRKNLQSEKE). Position 530 is a phosphothreonine (threonine 530). Residues 539 to 545 (PPRLPQR) form an interaction with HCK region. Residues 556-584 (QLSKEVEILSRNLVEMQRCLSELTNRLHN) are a coiled coil. A phosphoserine mark is found at serine 686 and serine 690.

As to quaternary structure, oligomer. Interacts with HCK (via SH3 domain). Post-translationally, phosphorylated on Tyr when associated with HCK.

The protein is WD repeat and coiled-coil-containing protein of Homo sapiens (Human).